A 96-amino-acid polypeptide reads, in one-letter code: uncharacterized protein (96 aa).

This is an uncharacterized protein from Saccharomyces cerevisiae (strain ATCC 204508 / S288c) (Baker's yeast).